Here is a 321-residue protein sequence, read N- to C-terminus: Cytochrome c biogenesis protein CcsA (321 aa).

The next 7 helical transmembrane spans lie at 9–29, 44–64, 68–88, 143–163, 225–245, 259–273, and 288–308; these read ILTHISFSTISIVITIHLITL, GMIATFFSITGFLVSRWVSSG, LSNLYESLIFLSWTLYILHTI, MLLSYATLLCGSLLSAALLII, VISLGFTLLTVGILCGAVWAN, TWAFITWTIFAIYLH, and VASIGFLIIWICYFGINLLGI.

Belongs to the CcmF/CycK/Ccl1/NrfE/CcsA family. May interact with Ccs1.

It is found in the plastid. The protein localises to the chloroplast thylakoid membrane. Functionally, required during biogenesis of c-type cytochromes (cytochrome c6 and cytochrome f) at the step of heme attachment. In Saccharum hybrid (Sugarcane), this protein is Cytochrome c biogenesis protein CcsA.